A 171-amino-acid polypeptide reads, in one-letter code: 3-hydroxydecanoyl-[acyl-carrier-protein] dehydratase (171 aa).

His-70 is a catalytic residue.

Belongs to the thioester dehydratase family. FabA subfamily. As to quaternary structure, homodimer.

The protein localises to the cytoplasm. It carries out the reaction a (3R)-hydroxyacyl-[ACP] = a (2E)-enoyl-[ACP] + H2O. The catalysed reaction is (3R)-hydroxydecanoyl-[ACP] = (2E)-decenoyl-[ACP] + H2O. It catalyses the reaction (2E)-decenoyl-[ACP] = (3Z)-decenoyl-[ACP]. It participates in lipid metabolism; fatty acid biosynthesis. Necessary for the introduction of cis unsaturation into fatty acids. Catalyzes the dehydration of (3R)-3-hydroxydecanoyl-ACP to E-(2)-decenoyl-ACP and then its isomerization to Z-(3)-decenoyl-ACP. Can catalyze the dehydratase reaction for beta-hydroxyacyl-ACPs with saturated chain lengths up to 16:0, being most active on intermediate chain length. The polypeptide is 3-hydroxydecanoyl-[acyl-carrier-protein] dehydratase (Stenotrophomonas maltophilia (strain R551-3)).